The sequence spans 80 residues: Saposin-B-Val (80 aa).

One can recognise a Saposin B-type domain in the interval 1-80 (GDVCQDCIQM…CGLVGFCEEV (80 aa)). Intrachain disulfides connect Cys4-Cys77, Cys7-Cys71, and Cys36-Cys47. An N-linked (GlcNAc...) (complex) asparagine glycan is attached at Asn21.

As to quaternary structure, saposin-B is a homodimer. Interacts with GRN; facilitates lysosomal delivery of progranulin from the extracellular space and the biosynthetic pathway. In terms of processing, the one residue extended Saposin-B-Val is only found in a minority of the chains.

Its function is as follows. Saposin-B stimulates the hydrolysis of galacto-cerebroside sulfate by arylsulfatase A (EC 3.1.6.8), GM1 gangliosides by beta-galactosidase (EC 3.2.1.23) and globotriaosylceramide by alpha-galactosidase A (EC 3.2.1.22). Saposin-B forms a solubilizing complex with the substrates of the sphingolipid hydrolases. This is Saposin-B-Val (PSAP) from Sus scrofa (Pig).